A 324-amino-acid polypeptide reads, in one-letter code: Acetaldehyde dehydrogenase 1 (324 aa).

18–21 (SGNI) is an NAD(+) binding site. The active-site Acyl-thioester intermediate is the Cys-136. Residues 167-175 (SAGPGTRAN) and Asn-297 contribute to the NAD(+) site.

Belongs to the acetaldehyde dehydrogenase family.

The catalysed reaction is acetaldehyde + NAD(+) + CoA = acetyl-CoA + NADH + H(+). This is Acetaldehyde dehydrogenase 1 from Parafrankia sp. (strain EAN1pec).